A 213-amino-acid chain; its full sequence is Adenylate kinase (213 aa).

10-15 provides a ligand contact to ATP; it reads GSGKGT. Residues 30–59 are NMP; that stretch reads STGDLFRTNIENDTPLGKEIKQIVENGQLV. Residues Thr-31, Arg-36, 57-59, 85-88, and Gln-92 each bind AMP; these read QLV and GFPR. The tract at residues 121–158 is LID; sequence GRRICQSCCKIFNIYTLPTKEKEICDFCQGILYQRKDD. Residue Arg-122 coordinates ATP. The Zn(2+) site is built by Cys-125 and Cys-128. 131–132 contacts ATP; sequence IF. Zn(2+)-binding residues include Cys-145 and Cys-148. Residues Arg-155 and Arg-166 each contribute to the AMP site. ATP is bound at residue Lys-194.

The protein belongs to the adenylate kinase family. As to quaternary structure, monomer.

The protein resides in the cytoplasm. It catalyses the reaction AMP + ATP = 2 ADP. Its pathway is purine metabolism; AMP biosynthesis via salvage pathway; AMP from ADP: step 1/1. Functionally, catalyzes the reversible transfer of the terminal phosphate group between ATP and AMP. Plays an important role in cellular energy homeostasis and in adenine nucleotide metabolism. This chain is Adenylate kinase, found in Borrelia duttonii (strain Ly).